Here is a 95-residue protein sequence, read N- to C-terminus: Histone-like DNA-binding protein (95 aa).

The protein belongs to the bacterial histone-like protein family.

The sequence is that of Histone-like DNA-binding protein from Rickettsia felis (strain ATCC VR-1525 / URRWXCal2) (Rickettsia azadi).